We begin with the raw amino-acid sequence, 275 residues long: Catechol 1,2-dioxygenase 2 (275 aa).

4 residues coordinate Fe cation: tyrosine 158, tyrosine 192, histidine 216, and histidine 218.

This sequence belongs to the intradiol ring-cleavage dioxygenase family. In terms of assembly, homodimer. It depends on Fe(3+) as a cofactor.

It carries out the reaction catechol + O2 = cis,cis-muconate + 2 H(+). Its pathway is aromatic compound metabolism; beta-ketoadipate pathway; 5-oxo-4,5-dihydro-2-furylacetate from catechol: step 1/3. In terms of biological role, can cleave 4-methyl-, 4-chloro-, and 3-methoxycatechol at lower rates than catechol, but has no activity with 4-nitrocatechol or protocatechuic acid. This chain is Catechol 1,2-dioxygenase 2 (catA2), found in Acinetobacter lwoffii.